Here is a 424-residue protein sequence, read N- to C-terminus: Gamma-glutamyl phosphate reductase (424 aa).

Belongs to the gamma-glutamyl phosphate reductase family.

It localises to the cytoplasm. The enzyme catalyses L-glutamate 5-semialdehyde + phosphate + NADP(+) = L-glutamyl 5-phosphate + NADPH + H(+). It functions in the pathway amino-acid biosynthesis; L-proline biosynthesis; L-glutamate 5-semialdehyde from L-glutamate: step 2/2. In terms of biological role, catalyzes the NADPH-dependent reduction of L-glutamate 5-phosphate into L-glutamate 5-semialdehyde and phosphate. The product spontaneously undergoes cyclization to form 1-pyrroline-5-carboxylate. In Shewanella woodyi (strain ATCC 51908 / MS32), this protein is Gamma-glutamyl phosphate reductase.